We begin with the raw amino-acid sequence, 117 residues long: Protein MGF 110-13L (117 aa).

The signal sequence occupies residues 1 to 16; it reads MKLFVLLSILVWLAQP.

This sequence belongs to the asfivirus MGF 110 family.

This Ornithodoros (relapsing fever ticks) protein is Protein MGF 110-13L.